The chain runs to 356 residues: CX3C chemokine receptor 1 (356 aa).

Topologically, residues 1–26 are extracellular; sequence MTTLYSDWATESFEYDESSEACFIGD. Residues 27 to 47 form a helical membrane-spanning segment; the sequence is IVAFGTIFLSIFYSLVFAFGL. Residues 48-68 are Cytoplasmic-facing; that stretch reads VGNLLVVCALTSSRKPKSITD. Residues 69–89 form a helical membrane-spanning segment; that stretch reads IYLLNLALSDLLFVATLPFWT. Residues 90 to 105 lie on the Extracellular side of the membrane; that stretch reads HYVISEQGFHNAVCKL. Residues Cys-103 and Cys-176 are joined by a disulfide bond. Residues 106-126 traverse the membrane as a helical segment; it reads TTALFFIGFFGGIFFITVISI. Residues 127-147 lie on the Cytoplasmic side of the membrane; it reads DRYMAIVLAANSINNRTVQHG. A helical transmembrane segment spans residues 148–168; the sequence is VTTSLGVWAAAILVAAPQFMF. Over 169-195 the chain is Extracellular; it reads TKQKGNECLGDYPEVLQDIWPVLRNTE. The helical transmembrane segment at 196–216 threads the bilayer; the sequence is ANFLGFLLPVLIMSYCYFRII. The Cytoplasmic portion of the chain corresponds to 217 to 232; the sequence is QTLFSCKNHKKAKAIK. The chain crosses the membrane as a helical span at residues 233-253; sequence LILLVVIVFFLFWTPYNVMIF. The Extracellular portion of the chain corresponds to 254-277; the sequence is LETLKLYGFFPNCDMKRDLRLALS. A helical transmembrane segment spans residues 278-298; it reads VTETVAFSHCCLNPLIYAFAG. At 299–356 the chain is on the cytoplasmic side; the sequence is QKFRRYLRHLSRKCQAVLCGRPVHVSFSPSESQRSRQESIVSSNFTHYTSDGDASLLL. Thr-347 carries the post-translational modification Phosphothreonine.

This sequence belongs to the G-protein coupled receptor 1 family. As to quaternary structure, found in a ternary complex with CX3CL1 and ITGAV:ITGB3 or ITGA4:ITGB1. Post-translationally, this protein is not N-glycosylated which is unusual for G-protein-coupled receptors.

It is found in the cell membrane. In terms of biological role, receptor for the C-X3-C chemokine fractalkine (CX3CL1) present on many early leukocyte cells; CX3CR1-CX3CL1 signaling exerts distinct functions in different tissue compartments, such as immune response, inflammation, cell adhesion and chemotaxis. CX3CR1-CX3CL1 signaling mediates cell migratory functions. Responsible for the recruitment of natural killer (NK) cells to inflamed tissues. Acts as a regulator of inflammation process leading to atherogenesis by mediating macrophage and monocyte recruitment to inflamed atherosclerotic plaques, promoting cell survival. Involved in airway inflammation by promoting interleukin 2-producing T helper (Th2) cell survival in inflamed lung. Involved in the migration of circulating monocytes to non-inflamed tissues, where they differentiate into macrophages and dendritic cells. Acts as a negative regulator of angiogenesis, probably by promoting macrophage chemotaxis. Plays a key role in brain microglia by regulating inflammatory response in the central nervous system (CNS) and regulating synapse maturation. Required to restrain the microglial inflammatory response in the CNS and the resulting parenchymal damage in response to pathological stimuli. Involved in brain development by participating in synaptic pruning, a natural process during which brain microglia eliminates extra synapses during postnatal development. Synaptic pruning by microglia is required to promote the maturation of circuit connectivity during brain development. Acts as an important regulator of the gut microbiota by controlling immunity to intestinal bacteria and fungi. Expressed in lamina propria dendritic cells in the small intestine, which form transepithelial dendrites capable of taking up bacteria in order to provide defense against pathogenic bacteria. Required to initiate innate and adaptive immune responses against dissemination of commensal fungi (mycobiota) component of the gut: expressed in mononuclear phagocytes (MNPs) and acts by promoting induction of antifungal IgG antibodies response to confer protection against disseminated C.albicans or C.auris infection. Also acts as a receptor for C-C motif chemokine CCL26, inducing cell chemotaxis. The chain is CX3C chemokine receptor 1 from Oryctolagus cuniculus (Rabbit).